We begin with the raw amino-acid sequence, 86 residues long: uncharacterized protein (86 aa).

Residues 12–32 (IIFIFAIIIIVVLCVITYLYL) form a helical membrane-spanning segment.

It localises to the membrane. This is an uncharacterized protein from Escherichia coli (strain K12).